Here is a 361-residue protein sequence, read N- to C-terminus: Monodechloroaminopyrrolnitrin synthase PrnB (361 aa).

222 to 225 provides a ligand contact to substrate; that stretch reads PGAV. H313 serves as a coordination point for heme. Substrate-binding residues include Y321 and S332.

This sequence belongs to the PrnB family. In terms of assembly, monomer. Heme b serves as cofactor.

It catalyses the reaction 7-chloro-L-tryptophan + AH2 + O2 = monodechloroaminopyrrolnitrin + A + CO2 + 2 H2O. The protein operates within antibiotic biosynthesis. In terms of biological role, involved in the biosynthesis of the antifungal antibiotic pyrrolnitrin. Catalyzes the ring rearrangement and decarboxylation to convert 7-chloro-L-tryptophan (7-CLT) to monodechloroaminopyrrolnitrin (MDA). It can also use 7-chloro-D-tryptophan, but 7-chloro-L-tryptophan is the preferred natural enantiomer. In Pseudomonas fluorescens, this protein is Monodechloroaminopyrrolnitrin synthase PrnB (prnB).